Consider the following 71-residue polypeptide: Beta-defensin 124 (71 aa).

A signal peptide spans 1–22; sequence MTQLLLFLVALLVLGHVPSGRS. Disulfide bonds link C27–C54, C34–C48, and C38–C55.

The protein belongs to the beta-defensin family.

The protein localises to the secreted. Its function is as follows. Has antibacterial activity. The chain is Beta-defensin 124 (DEFB124) from Pan troglodytes (Chimpanzee).